The sequence spans 150 residues: Cytochrome c oxidase subunit 5A, mitochondrial (150 aa).

The transit peptide at 1 to 41 (MLGAALRRCAVAATTWAGPRGLLHSSRTPGPAAAIQSVRCY) directs the protein to the mitochondrion. An SIFI-degron motif is present at residues 2–17 (LGAALRRCAVAATTWA). N6-acetyllysine is present on residues Lys87 and Lys113. Position 141 is a phosphothreonine (Thr141).

This sequence belongs to the cytochrome c oxidase subunit 5A family. In terms of assembly, component of the cytochrome c oxidase (complex IV, CIV), a multisubunit enzyme composed of 14 subunits. The complex is composed of a catalytic core of 3 subunits MT-CO1, MT-CO2 and MT-CO3, encoded in the mitochondrial DNA, and 11 supernumerary subunits COX4I, COX5A, COX5B, COX6A, COX6B, COX6C, COX7A, COX7B, COX7C, COX8 and NDUFA4, which are encoded in the nuclear genome. The complex exists as a monomer or a dimer and forms supercomplexes (SCs) in the inner mitochondrial membrane with NADH-ubiquinone oxidoreductase (complex I, CI) and ubiquinol-cytochrome c oxidoreductase (cytochrome b-c1 complex, complex III, CIII), resulting in different assemblies (supercomplex SCI(1)III(2)IV(1) and megacomplex MCI(2)III(2)IV(2)). Interacts with AFG1L. Interacts with RAB5IF. Post-translationally, in response to mitochondrial stress, the precursor protein is ubiquitinated by the SIFI complex in the cytoplasm before mitochondrial import, leading to its degradation. Within the SIFI complex, UBR4 initiates ubiquitin chain that are further elongated or branched by KCMF1.

It is found in the mitochondrion inner membrane. It functions in the pathway energy metabolism; oxidative phosphorylation. Its function is as follows. Component of the cytochrome c oxidase, the last enzyme in the mitochondrial electron transport chain which drives oxidative phosphorylation. The respiratory chain contains 3 multisubunit complexes succinate dehydrogenase (complex II, CII), ubiquinol-cytochrome c oxidoreductase (cytochrome b-c1 complex, complex III, CIII) and cytochrome c oxidase (complex IV, CIV), that cooperate to transfer electrons derived from NADH and succinate to molecular oxygen, creating an electrochemical gradient over the inner membrane that drives transmembrane transport and the ATP synthase. Cytochrome c oxidase is the component of the respiratory chain that catalyzes the reduction of oxygen to water. Electrons originating from reduced cytochrome c in the intermembrane space (IMS) are transferred via the dinuclear copper A center (CU(A)) of subunit 2 and heme A of subunit 1 to the active site in subunit 1, a binuclear center (BNC) formed by heme A3 and copper B (CU(B)). The BNC reduces molecular oxygen to 2 water molecules using 4 electrons from cytochrome c in the IMS and 4 protons from the mitochondrial matrix. This chain is Cytochrome c oxidase subunit 5A, mitochondrial (COX5A), found in Colobus guereza (Mantled guereza).